The chain runs to 1280 residues: Clustered mitochondria protein homolog (1280 aa).

The span at 1–27 (MAASSNDASKSAMANSNVTTEVAQTPS) shows a compositional bias: polar residues. 2 disordered regions span residues 1-49 (MAAS…GQLP) and 169-189 (GLDQSGKPKEDGPEQSPLADY). A compositionally biased stretch (acidic residues) spans 32–43 (VNGEVEATEEDG). The region spanning 338-582 (DLARTQESYL…RLTPLDVAWI (245 aa)) is the Clu domain. Disordered stretches follow at residues 633-669 (KANKARGGRRRLPKAQKKADAGKEVDGEKKAEAEPEQ), 905-943 (GAAVPTPAAPQTNGSSTSSKKKKNKTITPPRADSPAVSL), and 1214-1280 (TGRN…TQKP). Residues 635–648 (NKARGGRRRLPKAQ) show a composition bias toward basic residues. Residues 649–669 (KKADAGKEVDGEKKAEAEPEQ) show a composition bias toward basic and acidic residues. Positions 1221-1235 (PAAATPSVSDAAAAA) are enriched in low complexity. The segment covering 1245 to 1261 (VDQRKIEDLLKYIEGES) has biased composition (basic and acidic residues). Residues 1265-1280 (PTKKRTQNPRKRTQKP) show a composition bias toward basic residues.

Belongs to the CLU family. As to quaternary structure, may associate with the eukaryotic translation initiation factor 3 (eIF-3) complex.

The protein resides in the cytoplasm. MRNA-binding protein involved in proper cytoplasmic distribution of mitochondria. This chain is Clustered mitochondria protein homolog, found in Phaeosphaeria nodorum (strain SN15 / ATCC MYA-4574 / FGSC 10173) (Glume blotch fungus).